The sequence spans 686 residues: Pollen receptor-like kinase 5 (686 aa).

The first 39 residues, 1–39 (MRNWEDPFTLACNTALKKNLPSCIFIIIFISVLCPVAMS), serve as a signal peptide directing secretion. Residues 40–283 (QVVVPDSDAD…GKKAGSFYTL (244 aa)) are Extracellular-facing. N-linked (GlcNAc...) asparagine glycosylation is present at Asn-60. LRR repeat units follow at residues 112 to 135 (MKNL…VKRF), 136 to 159 (TSLK…AFLG), 161 to 184 (PLLK…LASL), 185 to 208 (PMLL…QQKD), and 210 to 230 (KLAS…LRNM). The chain crosses the membrane as a helical span at residues 284–304 (AIILIVIGIILVIIALVFCFV). Residues 305–686 (QSRRRNFLSA…DDDFGFSMNR (382 aa)) are Cytoplasmic-facing. Over residues 328–339 (NYHQSTNKNNKP) the composition is skewed to polar residues. The disordered stretch occupies residues 328-355 (NYHQSTNKNNKPAESVNHTRRGSMPDPG). Residues 375–648 (RASAEVLGSG…REVVEMVEML (274 aa)) enclose the Protein kinase domain. The residue at position 377 (Ser-377) is a Phosphoserine. Residues 381–389 (LGSGTFGAS) and Lys-403 contribute to the ATP site. A phosphoserine mark is found at Ser-455 and Ser-458. At Thr-472 the chain carries Phosphothreonine. The residue at position 542 (Tyr-542) is a Phosphotyrosine. Ser-545 is modified (phosphoserine).

This sequence belongs to the protein kinase superfamily. Ser/Thr protein kinase family. Interacts with the GRI peptide. In terms of tissue distribution, expressed in pollen and/or in flowers. Detected at low levels in leaves.

It localises to the cell membrane. The catalysed reaction is L-seryl-[protein] + ATP = O-phospho-L-seryl-[protein] + ADP + H(+). The enzyme catalyses L-threonyl-[protein] + ATP = O-phospho-L-threonyl-[protein] + ADP + H(+). Functionally, receptor-like kinase involved in the control of pollen germination and pollen tube polar growth. The extracellular domain serves as a sensor for peptides derived from GRI. May act as a downstream element for ROS-dependent cell death induced by GRI. The chain is Pollen receptor-like kinase 5 from Arabidopsis thaliana (Mouse-ear cress).